The following is a 168-amino-acid chain: Bifunctional protein PyrR (168 aa).

Substrate contacts are provided by residues 36–37, Arg77, 94–102, and Val151; these read TG and DDVLMSGRT. Positions 90–102 match the PRPP-binding motif; that stretch reads LVLIDDVLMSGRT.

It belongs to the purine/pyrimidine phosphoribosyltransferase family. PyrR subfamily.

It carries out the reaction UMP + diphosphate = 5-phospho-alpha-D-ribose 1-diphosphate + uracil. Functionally, regulates the transcription of the pyrimidine nucleotide (pyr) operon in response to exogenous pyrimidines. In terms of biological role, also displays a weak uracil phosphoribosyltransferase activity which is not physiologically significant. This chain is Bifunctional protein PyrR, found in Pseudomonas fluorescens.